Here is a 1144-residue protein sequence, read N- to C-terminus: Formin-like protein 18 (1144 aa).

One can recognise a Phosphatase tensin-type domain in the interval 17–193 (LEISERVYVF…QYISRRNVGS (177 aa)). Catalysis depends on Cys-126, which acts as the Phosphocysteine intermediate. The 140-residue stretch at 199–338 (DQALTLDCVN…FSAEVIFSEM (140 aa)) folds into the C2 tensin-type domain. Disordered stretches follow at residues 429–463 (ISEN…SILK) and 482–729 (KIFS…KGRG). Basic and acidic residues predominate over residues 441–450 (SPEKEKDTMS). Polar residues predominate over residues 491–522 (SPVTSPLPNRSPTQGSPASISRFHSSPSSLGI). Residues 526-536 (LHDHGSCKDEE) show a composition bias toward basic and acidic residues. Positions 538–548 (TSSSPASPSIS) are enriched in low complexity. Polar residues predominate over residues 555 to 580 (PLTSSQPKKASPQCPQSPTPVHSNGP). Positions 603–613 (RPPPPPPPPPI) are enriched in pro residues. Over residues 614-629 (SSLRSTPSPSSTSNSI) the composition is skewed to low complexity. Pro residues predominate over residues 633–643 (GPPPPPPPPPL). A compositionally biased stretch (low complexity) spans 644–653 (QSHRSALSSS). The segment covering 669-678 (NPPPPPPPPL) has biased composition (pro residues). Over residues 679 to 695 (HSNSRMGAPTSSLVLKS) the composition is skewed to low complexity. Residues 696–705 (PPVPPPPAPA) are compositionally biased toward pro residues. The region spanning 735–1135 (KGQGQTRKAN…RAQKEAENEK (401 aa)) is the FH2 domain.

This sequence belongs to the formin-like family. Class-II subfamily.

The protein is Formin-like protein 18 (FH18) of Arabidopsis thaliana (Mouse-ear cress).